Reading from the N-terminus, the 179-residue chain is Probable mitochondrial import inner membrane translocase subunit Tim17 1 (179 aa).

Helical transmembrane passes span 17 to 37, 61 to 81, and 113 to 133; these read CGGAFAMGALGGGAFQAIKGF, LVGGNFAVWGATFSAIDCSLV, and LSSALVGGALLALIEGVGIVV.

This sequence belongs to the Tim17/Tim22/Tim23 family. In terms of assembly, component of the TIM23 complex at least composed of Tim23, Tim17 (Tim17a1, Tim17a2 or Tim17b1) and a Tim50. The complex interacts with the Tim44 component of the PAM complex.

It is found in the mitochondrion inner membrane. In terms of biological role, essential component of the TIM23 complex, a complex that mediates the translocation of transit peptide-containing proteins across the mitochondrial inner membrane. This chain is Probable mitochondrial import inner membrane translocase subunit Tim17 1 (Tim17b1), found in Drosophila melanogaster (Fruit fly).